The sequence spans 89 residues: MAISQERKNEIIKEYRVHETDTGSPEVQIAVLTAEINAVNEHLRTHKKDHHSRRGLLKMVGRRRHLLNYLRSKDIQRYRELIKSLGIRR.

This sequence belongs to the universal ribosomal protein uS15 family. Part of the 30S ribosomal subunit. Forms a bridge to the 50S subunit in the 70S ribosome, contacting the 23S rRNA.

In terms of biological role, one of the primary rRNA binding proteins, it binds directly to 16S rRNA where it helps nucleate assembly of the platform of the 30S subunit by binding and bridging several RNA helices of the 16S rRNA. Forms an intersubunit bridge (bridge B4) with the 23S rRNA of the 50S subunit in the ribosome. The sequence is that of Small ribosomal subunit protein uS15 from Staphylococcus aureus (strain JH1).